The primary structure comprises 56 residues: Zinc finger mu-protein HVO_0758 (56 aa).

The Zn(2+) site is built by cysteine 23, cysteine 26, cysteine 45, and cysteine 48. 2 consecutive short sequence motifs (c(P)XCG motif) follow at residues 23–27 and 45–49; these read CSECG and CADCG.

As to quaternary structure, monomer.

Its function is as follows. Zinc-binding protein that binds one zinc ion. Is involved in biofilm formation, swarming and glycerol metabolism regulation. The chain is Zinc finger mu-protein HVO_0758 from Haloferax volcanii (strain ATCC 29605 / DSM 3757 / JCM 8879 / NBRC 14742 / NCIMB 2012 / VKM B-1768 / DS2) (Halobacterium volcanii).